The following is a 149-amino-acid chain: Immunoglobulin kappa chain variable 6-17 (149 aa).

Residues 1 to 29 (MHHTSMGIKMESQIQVFVFVFLWLSGVDG) form the signal peptide. 2 consecutive repeats follow at residues 26–35 (GVDGDIVMTQ) and 38–47 (GVDGDIVMTQ). The tract at residues 42 to 64 (DIVMTQSHKFMSTSVGDRVSITC) is framework-1. The segment at 65-75 (KASQDVSTTVA) is complementarity-determining-1. Residues 76–90 (WYQQKPGQSPKLLIY) form a framework-2 region. Positions 91 to 97 (SASYRYT) are complementarity-determining-2. The framework-3 stretch occupies residues 98–129 (GVPDRFTGSGSGTDFTFTISSVQAEDLAVYYC). The tract at residues 130–138 (QQHYSTPPT) is complementarity-determining-3. A framework-4 region spans residues 139-148 (FGGGTKLEIK).

This Mus musculus (Mouse) protein is Immunoglobulin kappa chain variable 6-17.